The primary structure comprises 500 residues: UDP-N-acetylmuramoyl-L-alanyl-D-glutamate--2,6-diaminopimelate ligase (500 aa).

Position 32 (Ser32) interacts with UDP-N-acetyl-alpha-D-muramoyl-L-alanyl-D-glutamate. 117 to 123 lines the ATP pocket; that stretch reads GTNGKTT. UDP-N-acetyl-alpha-D-muramoyl-L-alanyl-D-glutamate contacts are provided by residues 159–160, Ser186, Gln192, and Arg194; that span reads TT. N6-carboxylysine is present on Lys226. Meso-2,6-diaminopimelate contacts are provided by residues Arg395, 419–422, Gly470, and Glu474; that span reads DNPR. Residues 419–422 carry the Meso-diaminopimelate recognition motif motif; that stretch reads DNPR.

This sequence belongs to the MurCDEF family. MurE subfamily. The cofactor is Mg(2+). Carboxylation is probably crucial for Mg(2+) binding and, consequently, for the gamma-phosphate positioning of ATP.

The protein resides in the cytoplasm. The enzyme catalyses UDP-N-acetyl-alpha-D-muramoyl-L-alanyl-D-glutamate + meso-2,6-diaminopimelate + ATP = UDP-N-acetyl-alpha-D-muramoyl-L-alanyl-gamma-D-glutamyl-meso-2,6-diaminopimelate + ADP + phosphate + H(+). It functions in the pathway cell wall biogenesis; peptidoglycan biosynthesis. Its function is as follows. Catalyzes the addition of meso-diaminopimelic acid to the nucleotide precursor UDP-N-acetylmuramoyl-L-alanyl-D-glutamate (UMAG) in the biosynthesis of bacterial cell-wall peptidoglycan. In Parasynechococcus marenigrum (strain WH8102), this protein is UDP-N-acetylmuramoyl-L-alanyl-D-glutamate--2,6-diaminopimelate ligase.